An 89-amino-acid chain; its full sequence is Small ribosomal subunit protein uS15 (89 aa).

The protein belongs to the universal ribosomal protein uS15 family. In terms of assembly, part of the 30S ribosomal subunit. Forms a bridge to the 50S subunit in the 70S ribosome, contacting the 23S rRNA.

One of the primary rRNA binding proteins, it binds directly to 16S rRNA where it helps nucleate assembly of the platform of the 30S subunit by binding and bridging several RNA helices of the 16S rRNA. Its function is as follows. Forms an intersubunit bridge (bridge B4) with the 23S rRNA of the 50S subunit in the ribosome. The sequence is that of Small ribosomal subunit protein uS15 from Cupriavidus necator (strain ATCC 17699 / DSM 428 / KCTC 22496 / NCIMB 10442 / H16 / Stanier 337) (Ralstonia eutropha).